The sequence spans 558 residues: Hepatocyte nuclear factor 1-beta (558 aa).

The interval 1–31 (MVSKLTSLQQELLSALLSSGVTKEVLIQALE) is dimerization. Residues 1 to 32 (MVSKLTSLQQELLSALLSSGVTKEVLIQALEE) enclose the HNF-p1 domain. Residues Ser49, Ser52, Ser75, and Ser80 each carry the phosphoserine modification. The segment at 66 to 85 (TNGHAKGRLSGDEGSEDGDD) is disordered. Residues 93–188 (KELQALNTEE…ILRQFNQTVQ (96 aa)) enclose the POU-specific atypical domain. The homeobox; HNF1-type DNA-binding region spans 231–311 (MRRNRFKWGP…NRRKEEAFRQ (81 aa)). The tract at residues 323 to 348 (THNLNPLLTHGSPHHQPSSSPPNKMS) is disordered.

It belongs to the HNF1 homeobox family. As to quaternary structure, binds DNA as a dimer. Can form homodimer or heterodimer with HNF1-alpha. Interacts (via HNF-p1 domain) with PCBD1; the interaction increases its transactivation activity.

It localises to the nucleus. Its function is as follows. Transcription factor that binds to the inverted palindrome 5'-GTTAATNATTAAC-3'. Binds to the FPC element in the cAMP regulatory unit of the PLAU gene. Transcriptional activity is increased by coactivator PCBD1. The polypeptide is Hepatocyte nuclear factor 1-beta (Hnf1b) (Mus musculus (Mouse)).